Here is a 227-residue protein sequence, read N- to C-terminus: Phosphoribosylformylglycinamidine synthase subunit PurQ (227 aa).

The 223-residue stretch at 3–225 (FAVIVLPGSN…VKNWRETHVA (223 aa)) folds into the Glutamine amidotransferase type-1 domain. Cysteine 86 serves as the catalytic Nucleophile. Residues histidine 194 and glutamate 196 contribute to the active site.

In terms of assembly, part of the FGAM synthase complex composed of 1 PurL, 1 PurQ and 2 PurS subunits.

It localises to the cytoplasm. It carries out the reaction N(2)-formyl-N(1)-(5-phospho-beta-D-ribosyl)glycinamide + L-glutamine + ATP + H2O = 2-formamido-N(1)-(5-O-phospho-beta-D-ribosyl)acetamidine + L-glutamate + ADP + phosphate + H(+). It catalyses the reaction L-glutamine + H2O = L-glutamate + NH4(+). The protein operates within purine metabolism; IMP biosynthesis via de novo pathway; 5-amino-1-(5-phospho-D-ribosyl)imidazole from N(2)-formyl-N(1)-(5-phospho-D-ribosyl)glycinamide: step 1/2. Part of the phosphoribosylformylglycinamidine synthase complex involved in the purines biosynthetic pathway. Catalyzes the ATP-dependent conversion of formylglycinamide ribonucleotide (FGAR) and glutamine to yield formylglycinamidine ribonucleotide (FGAM) and glutamate. The FGAM synthase complex is composed of three subunits. PurQ produces an ammonia molecule by converting glutamine to glutamate. PurL transfers the ammonia molecule to FGAR to form FGAM in an ATP-dependent manner. PurS interacts with PurQ and PurL and is thought to assist in the transfer of the ammonia molecule from PurQ to PurL. In Bacillus licheniformis (strain ATCC 14580 / DSM 13 / JCM 2505 / CCUG 7422 / NBRC 12200 / NCIMB 9375 / NCTC 10341 / NRRL NRS-1264 / Gibson 46), this protein is Phosphoribosylformylglycinamidine synthase subunit PurQ.